Reading from the N-terminus, the 51-residue chain is Sperm protamine P1 (51 aa).

Residues 1-13 are compositionally biased toward low complexity; it reads MARYRCCRSQSRS. The interval 1–30 is disordered; the sequence is MARYRCCRSQSRSRYYRQRQRSRRRRRRSC. A compositionally biased stretch (basic residues) spans 14-30; that stretch reads RYYRQRQRSRRRRRRSC. Cys40 and Cys48 are oxidised to a cystine.

Belongs to the protamine P1 family. Cross-linked by interchain disulfide bonds around the DNA-helix. Phosphorylated by SRPK1. Testis.

The protein resides in the nucleus. It is found in the chromosome. Protamines substitute for histones in the chromatin of sperm during the haploid phase of spermatogenesis. They compact sperm DNA into a highly condensed, stable and inactive complex. The protein is Sperm protamine P1 (PRM1) of Homo sapiens (Human).